Reading from the N-terminus, the 725-residue chain is Ribonuclease R (725 aa).

In terms of domain architecture, RNB spans 264-592 (RQDLTDLAFV…IHRLLWMHLF (329 aa)). The region spanning 644–725 (GKTFSGFISA…IQKRAILTLI (82 aa)) is the S1 motif domain.

Belongs to the RNR ribonuclease family. RNase R subfamily.

It is found in the cytoplasm. It carries out the reaction Exonucleolytic cleavage in the 3'- to 5'-direction to yield nucleoside 5'-phosphates.. 3'-5' exoribonuclease that releases 5'-nucleoside monophosphates and is involved in maturation of structured RNAs. The sequence is that of Ribonuclease R from Mycoplasma genitalium (strain ATCC 33530 / DSM 19775 / NCTC 10195 / G37) (Mycoplasmoides genitalium).